A 230-amino-acid polypeptide reads, in one-letter code: Probable C4-dicarboxylate response regulator DctR (230 aa).

Positions 8 to 124 (RVLLIEDDPM…RLKAALTQYE (117 aa)) constitute a Response regulatory domain. The residue at position 59 (Asp59) is a 4-aspartylphosphate. A DNA-binding region (H-T-H motif) is located at residues 183–209 (EEIGRDVGLARVTVRRYLNYLESVGQV).

Post-translationally, phosphorylated by DctS.

The protein localises to the cytoplasm. Member of the two-component regulatory system DctS/DctR. Essential for expression of DctP. The polypeptide is Probable C4-dicarboxylate response regulator DctR (dctR) (Halalkalibacterium halodurans (strain ATCC BAA-125 / DSM 18197 / FERM 7344 / JCM 9153 / C-125) (Bacillus halodurans)).